A 331-amino-acid polypeptide reads, in one-letter code: 5-dehydro-2-deoxygluconokinase (331 aa).

This sequence belongs to the carbohydrate kinase PfkB family.

It catalyses the reaction 5-dehydro-2-deoxy-D-gluconate + ATP = 6-phospho-5-dehydro-2-deoxy-D-gluconate + ADP + H(+). It participates in polyol metabolism; myo-inositol degradation into acetyl-CoA; acetyl-CoA from myo-inositol: step 5/7. Its function is as follows. Catalyzes the phosphorylation of 5-dehydro-2-deoxy-D-gluconate (2-deoxy-5-keto-D-gluconate or DKG) to 6-phospho-5-dehydro-2-deoxy-D-gluconate (DKGP). The sequence is that of 5-dehydro-2-deoxygluconokinase from Halalkalibacterium halodurans (strain ATCC BAA-125 / DSM 18197 / FERM 7344 / JCM 9153 / C-125) (Bacillus halodurans).